Here is a 698-residue protein sequence, read N- to C-terminus: Sucrose non-fermenting protein kinase 1 (698 aa).

A disordered region spans residues 1-48 (MAPRGFEDEELTISLSSSHVRRPQQQQPPPPTQQQHAHQPGSRPADAP). In terms of domain architecture, Protein kinase spans 62 to 313 (YKVLRTLGEG…IEDIRADPWF (252 aa)). ATP is bound by residues 68–76 (LGEGSFGKV) and K91. The active-site Proton acceptor is D184. Positions 320 to 417 (YLQLPVEEFF…ALLEPEGSSP (98 aa)) are auto-inhibitory domain (AID). Positions 360-397 (VTEKISKTMGYGKNDVEEALQASEPSAIKDAYMIVREN) constitute a UBA domain. Disordered regions lie at residues 410 to 435 (LEPEGSSPMLSMSSARSATSTTTTTA), 482 to 525 (TRTD…KKTK), and 564 to 597 (ESRHAEERAEASGNGSFADSYDGSRGSTTSIDPM). Over residues 415–435 (SSPMLSMSSARSATSTTTTTA) the composition is skewed to low complexity. Basic and acidic residues-rich tracts occupy residues 484-493 (TDAEKEETSR) and 564-573 (ESRHAEERAE).

The protein belongs to the protein kinase superfamily. CAMK Ser/Thr protein kinase family. SNF1 subfamily. As to quaternary structure, component of the AMP-activated protein kinase complex also known as the SNF1 kinase complex (Snf1c), a heterotrimeric complex composed of a catalytic subunit alpha and 2 regulatory subunits beta and gamma.

Its subcellular location is the cytoplasm. The protein localises to the nucleus. The catalysed reaction is L-seryl-[protein] + ATP = O-phospho-L-seryl-[protein] + ADP + H(+). It catalyses the reaction L-threonyl-[protein] + ATP = O-phospho-L-threonyl-[protein] + ADP + H(+). Its function is as follows. Catalytic subunit of the AMP-activated protein kinase complex also known as the SNF1 kinase complex (Snf1c), a central regulator of cellular energy homeostasis, which, in response to a fall in intracellular ATP levels, activates energy-producing pathways and inhibits energy-consuming processes. The complex phosphorylates histone H3 to form H3S10ph, which promotes H3K14ac formation, leading to transcriptional activation through TBP recruitment to the promoters. Activates the expression of the galactose oxidase (GOA) gene and of several cell wall-degrading enzymes (CWDEs) such as pectate lyase, xylanase and glucanase. Plays an important role in sudden death syndrome (SDS) by controlling the colonization of the infected roots. The protein is Sucrose non-fermenting protein kinase 1 of Fusarium virguliforme.